The sequence spans 179 residues: Endoribonuclease YbeY (179 aa).

Zn(2+) is bound by residues H148, H152, and H158.

It belongs to the endoribonuclease YbeY family. It depends on Zn(2+) as a cofactor.

It localises to the cytoplasm. Its function is as follows. Single strand-specific metallo-endoribonuclease involved in late-stage 70S ribosome quality control and in maturation of the 3' terminus of the 16S rRNA. This is Endoribonuclease YbeY from Prochlorococcus marinus (strain MIT 9215).